Reading from the N-terminus, the 240-residue chain is Ribonuclease HII (240 aa).

In terms of domain architecture, RNase H type-2 spans 29–220 (EPIAGVDEAG…VRRAAGLEPL (192 aa)). A divalent metal cation is bound by residues D35, E36, and D129.

This sequence belongs to the RNase HII family. It depends on Mn(2+) as a cofactor. Mg(2+) serves as cofactor.

It is found in the cytoplasm. The catalysed reaction is Endonucleolytic cleavage to 5'-phosphomonoester.. Its function is as follows. Endonuclease that specifically degrades the RNA of RNA-DNA hybrids. The protein is Ribonuclease HII of Nocardioides sp. (strain ATCC BAA-499 / JS614).